The following is a 375-amino-acid chain: Growth/differentiation factor 8 (375 aa).

Residues Met-1–Leu-23 form the signal peptide. The propeptide occupies Asn-24 to Arg-266. N-linked (GlcNAc...) asparagine glycosylation is present at Asn-71. Cystine bridges form between Cys-272–Cys-282, Cys-281–Cys-340, Cys-309–Cys-372, and Cys-313–Cys-374.

This sequence belongs to the TGF-beta family. Homodimer; disulfide-linked. Interacts with WFIKKN2, leading to inhibit its activity. Interacts with FSTL3. Synthesized as large precursor molecule that undergoes proteolytic cleavage to generate an N-terminal propeptide and a disulfide linked C-terminal dimer, which is the biologically active molecule. The circulating form consists of a latent complex of the C-terminal dimer and other proteins, including its propeptide, which maintain the C-terminal dimer in a latent, inactive state. Ligand activation requires additional cleavage of the prodomain by a tolloid-like metalloproteinase.

It localises to the secreted. Acts specifically as a negative regulator of skeletal muscle growth. The sequence is that of Growth/differentiation factor 8 (MSTN) from Sus scrofa (Pig).